We begin with the raw amino-acid sequence, 94 residues long: Large ribosomal subunit protein uL23 (94 aa).

The protein belongs to the universal ribosomal protein uL23 family. As to quaternary structure, part of the 50S ribosomal subunit. Contacts protein L29, and trigger factor when it is bound to the ribosome.

One of the early assembly proteins it binds 23S rRNA. One of the proteins that surrounds the polypeptide exit tunnel on the outside of the ribosome. Forms the main docking site for trigger factor binding to the ribosome. This Dehalococcoides mccartyi (strain ATCC BAA-2100 / JCM 16839 / KCTC 5957 / BAV1) protein is Large ribosomal subunit protein uL23.